The chain runs to 295 residues: Diaminopimelate epimerase (295 aa).

Substrate contacts are provided by asparagine 13 and asparagine 69. The Proton donor role is filled by cysteine 78. Residues 79–80, asparagine 173, asparagine 212, and 230–231 contribute to the substrate site; these read GN and ER. Cysteine 239 serves as the catalytic Proton acceptor. 240-241 is a substrate binding site; it reads GT.

The protein belongs to the diaminopimelate epimerase family. In terms of assembly, homodimer.

The protein localises to the cytoplasm. The enzyme catalyses (2S,6S)-2,6-diaminopimelate = meso-2,6-diaminopimelate. The protein operates within amino-acid biosynthesis; L-lysine biosynthesis via DAP pathway; DL-2,6-diaminopimelate from LL-2,6-diaminopimelate: step 1/1. Its function is as follows. Catalyzes the stereoinversion of LL-2,6-diaminopimelate (L,L-DAP) to meso-diaminopimelate (meso-DAP), a precursor of L-lysine. The polypeptide is Diaminopimelate epimerase (Methanococcus aeolicus (strain ATCC BAA-1280 / DSM 17508 / OCM 812 / Nankai-3)).